A 315-amino-acid chain; its full sequence is Glutamyl-Q tRNA(Asp) synthetase (315 aa).

L-glutamate contacts are provided by residues 23-27 (RFAPS) and Glu59. A 'HIGH' region motif is present at residues 26–36 (PSPTGPLHIGS). Zn(2+)-binding residues include Cys115, Cys117, Tyr142, and Cys146. The L-glutamate site is built by Tyr202 and Arg220. Residues 258–262 (KLSKQ) carry the 'KMSKS' region motif. Residue Lys261 coordinates ATP.

Belongs to the class-I aminoacyl-tRNA synthetase family. GluQ subfamily. Zn(2+) serves as cofactor.

Catalyzes the tRNA-independent activation of glutamate in presence of ATP and the subsequent transfer of glutamate onto a tRNA(Asp). Glutamate is transferred on the 2-amino-5-(4,5-dihydroxy-2-cyclopenten-1-yl) moiety of the queuosine in the wobble position of the QUC anticodon. This is Glutamyl-Q tRNA(Asp) synthetase from Ralstonia nicotianae (strain ATCC BAA-1114 / GMI1000) (Ralstonia solanacearum).